Here is a 710-residue protein sequence, read N- to C-terminus: E3 ubiquitin-protein ligase TRIM9 (710 aa).

The RING-type zinc-finger motif lies at 10–50; sequence CPVCGSFYREPIILPCSHNICQACARNILVQTPESESPQSR. Threonine 41 is modified (phosphothreonine). A phosphoserine mark is found at serine 44, serine 46, serine 49, and serine 53. 2 B box-type zinc fingers span residues 163–212 and 224–266; these read AAAL…LVPP and RKVS…VKAL. Residues cysteine 168, cysteine 171, cysteine 193, histidine 198, cysteine 229, histidine 232, cysteine 252, and histidine 258 each contribute to the Zn(2+) site. Residues 273–340 are a coiled coil; it reads HKSQLSQALN…KAQLLARVNK (68 aa). One can recognise a COS domain in the interval 374 to 432; that stretch reads IKENDPSGFLQISDALIRRVHLTEDQWGKGTLTPRMTTDFDLSLDNSPLLQSIHQLDFV. Residues 440–535 enclose the Fibronectin type-III domain; it reads VPATPILQLE…KTLVLQTSEV (96 aa). One can recognise a B30.2/SPRY domain in the interval 533-702; sequence SEVAWFAFDP…LHTGLQVPDF (170 aa).

It belongs to the TRIM/RBCC family. In terms of assembly, interacts with SNAP25. Auto-ubiquitinated.

It localises to the cytoplasm. The protein localises to the cell projection. Its subcellular location is the dendrite. The protein resides in the cytoplasmic vesicle. It is found in the secretory vesicle. It localises to the synaptic vesicle. The protein localises to the synapse. Its subcellular location is the cytoskeleton. The catalysed reaction is S-ubiquitinyl-[E2 ubiquitin-conjugating enzyme]-L-cysteine + [acceptor protein]-L-lysine = [E2 ubiquitin-conjugating enzyme]-L-cysteine + N(6)-ubiquitinyl-[acceptor protein]-L-lysine.. The protein operates within protein modification; protein ubiquitination. Functionally, E3 ubiquitin-protein ligase which ubiquitinates itself in cooperation with an E2 enzyme UBE2D2/UBC4 and serves as a targeting signal for proteasomal degradation. May play a role in regulation of neuronal functions. May act as a regulator of synaptic vesicle exocytosis by controlling the availability of SNAP25 for the SNARE complex formation. The polypeptide is E3 ubiquitin-protein ligase TRIM9 (TRIM9) (Bos taurus (Bovine)).